The following is a 298-amino-acid chain: Max-like protein X (298 aa).

The segment at 1–63 (MTEPGASPED…ARGCREDSSH (63 aa)) is disordered. Serine 7 is subject to Phosphoserine. Residues 28–37 (GRARARRGSG) show a composition bias toward basic residues. 5 positions are modified to phosphoserine: serine 45, serine 48, serine 74, serine 77, and serine 98. A compositionally biased stretch (polar residues) spans 98 to 109 (SIGSTSASSVPN). Residues 98 to 119 (SIGSTSASSVPNTDDEDSDYQQ) form a disordered region. One can recognise a bHLH domain in the interval 129–187 (RRRRAHTQAEQKRRDAIKRGYDDLQTIVPTCQQQDFSIGSQKLSKAIVLQKTIDYIQFL). The tract at residues 194 to 214 (QEEEVSTLRKDVTALKIMKVN) is leucine-zipper.

Efficient DNA binding requires dimerization with another bHLH protein. Binds DNA as a heterodimer with MAD1, MAD4, MNT, WBSCR14 and MLXIP. Can also bind DNA as a homodimer. As to expression, expressed in all tissues examined: stomach, duodenum, jejunum, ileum, colon, liver, pancreas, salivary gland, kidney, spleen, lung, heart, skeletal muscle, brain, ovary and testis.

The protein localises to the cytoplasm. It is found in the nucleus. Transcription regulator. Forms a sequence-specific DNA-binding protein complex with MAD1, MAD4, MNT, WBSCR14 and MLXIP which recognizes the core sequence 5'-CACGTG-3'. The TCFL4-MAD1, TCFL4-MAD4, TCFL4-WBSCR14 complexes are transcriptional repressors. Plays a role in transcriptional activation of glycolytic target genes. Involved in glucose-responsive gene regulation. This is Max-like protein X (Mlx) from Mus musculus (Mouse).